We begin with the raw amino-acid sequence, 173 residues long: dCTP deaminase, dUMP-forming (173 aa).

Residues 93-98, D111, 119-121, and Q138 each bind dCTP; these read RSSIGR and TLE. E121 acts as the Proton donor/acceptor in catalysis.

The protein belongs to the dCTP deaminase family. In terms of assembly, homotrimer.

The enzyme catalyses dCTP + 2 H2O = dUMP + NH4(+) + diphosphate. It participates in pyrimidine metabolism; dUMP biosynthesis; dUMP from dCTP: step 1/1. Functionally, bifunctional enzyme that catalyzes both the deamination of dCTP to dUTP and the hydrolysis of dUTP to dUMP without releasing the toxic dUTP intermediate. The sequence is that of dCTP deaminase, dUMP-forming from Leptospira interrogans serogroup Icterohaemorrhagiae serovar copenhageni (strain Fiocruz L1-130).